The primary structure comprises 1343 residues: DNA-directed RNA polymerase subunit beta (1343 aa).

The protein belongs to the RNA polymerase beta chain family. The RNAP catalytic core consists of 2 alpha, 1 beta, 1 beta' and 1 omega subunit. When a sigma factor is associated with the core the holoenzyme is formed, which can initiate transcription.

The catalysed reaction is RNA(n) + a ribonucleoside 5'-triphosphate = RNA(n+1) + diphosphate. Its function is as follows. DNA-dependent RNA polymerase catalyzes the transcription of DNA into RNA using the four ribonucleoside triphosphates as substrates. This Buchnera aphidicola subsp. Cinara cedri (strain Cc) protein is DNA-directed RNA polymerase subunit beta.